The primary structure comprises 938 residues: Isoleucine--tRNA ligase (938 aa).

The 'HIGH' region signature appears at 58-68; it reads PYANGSIHIGH. Position 183 is an N6-acetyllysine (lysine 183). Glutamate 561 provides a ligand contact to L-isoleucyl-5'-AMP. Positions 602–606 match the 'KMSKS' region motif; that stretch reads KMSKS. Residue lysine 605 participates in ATP binding. Zn(2+)-binding residues include cysteine 901, cysteine 904, cysteine 921, and cysteine 924.

Belongs to the class-I aminoacyl-tRNA synthetase family. IleS type 1 subfamily. Monomer. It depends on Zn(2+) as a cofactor.

It is found in the cytoplasm. The catalysed reaction is tRNA(Ile) + L-isoleucine + ATP = L-isoleucyl-tRNA(Ile) + AMP + diphosphate. Its function is as follows. Catalyzes the attachment of isoleucine to tRNA(Ile). As IleRS can inadvertently accommodate and process structurally similar amino acids such as valine, to avoid such errors it has two additional distinct tRNA(Ile)-dependent editing activities. One activity is designated as 'pretransfer' editing and involves the hydrolysis of activated Val-AMP. The other activity is designated 'posttransfer' editing and involves deacylation of mischarged Val-tRNA(Ile). In Escherichia coli O7:K1 (strain IAI39 / ExPEC), this protein is Isoleucine--tRNA ligase.